We begin with the raw amino-acid sequence, 164 residues long: SsrA-binding protein (164 aa).

The protein belongs to the SmpB family.

It localises to the cytoplasm. Required for rescue of stalled ribosomes mediated by trans-translation. Binds to transfer-messenger RNA (tmRNA), required for stable association of tmRNA with ribosomes. tmRNA and SmpB together mimic tRNA shape, replacing the anticodon stem-loop with SmpB. tmRNA is encoded by the ssrA gene; the 2 termini fold to resemble tRNA(Ala) and it encodes a 'tag peptide', a short internal open reading frame. During trans-translation Ala-aminoacylated tmRNA acts like a tRNA, entering the A-site of stalled ribosomes, displacing the stalled mRNA. The ribosome then switches to translate the ORF on the tmRNA; the nascent peptide is terminated with the 'tag peptide' encoded by the tmRNA and targeted for degradation. The ribosome is freed to recommence translation, which seems to be the essential function of trans-translation. In Corynebacterium efficiens (strain DSM 44549 / YS-314 / AJ 12310 / JCM 11189 / NBRC 100395), this protein is SsrA-binding protein.